Consider the following 514-residue polypeptide: ATP synthase subunit alpha (514 aa).

170 to 177 (GDRQTGKT) contacts ATP.

Belongs to the ATPase alpha/beta chains family. F-type ATPases have 2 components, CF(1) - the catalytic core - and CF(0) - the membrane proton channel. CF(1) has five subunits: alpha(3), beta(3), gamma(1), delta(1), epsilon(1). CF(0) has three main subunits: a(1), b(2) and c(9-12). The alpha and beta chains form an alternating ring which encloses part of the gamma chain. CF(1) is attached to CF(0) by a central stalk formed by the gamma and epsilon chains, while a peripheral stalk is formed by the delta and b chains.

It localises to the cell inner membrane. The catalysed reaction is ATP + H2O + 4 H(+)(in) = ADP + phosphate + 5 H(+)(out). Its function is as follows. Produces ATP from ADP in the presence of a proton gradient across the membrane. The alpha chain is a regulatory subunit. This chain is ATP synthase subunit alpha, found in Psychrobacter arcticus (strain DSM 17307 / VKM B-2377 / 273-4).